Here is a 205-residue protein sequence, read N- to C-terminus: ATP phosphoribosyltransferase (205 aa).

It belongs to the ATP phosphoribosyltransferase family. Short subfamily. Heteromultimer composed of HisG and HisZ subunits.

Its subcellular location is the cytoplasm. It carries out the reaction 1-(5-phospho-beta-D-ribosyl)-ATP + diphosphate = 5-phospho-alpha-D-ribose 1-diphosphate + ATP. The protein operates within amino-acid biosynthesis; L-histidine biosynthesis; L-histidine from 5-phospho-alpha-D-ribose 1-diphosphate: step 1/9. Its function is as follows. Catalyzes the condensation of ATP and 5-phosphoribose 1-diphosphate to form N'-(5'-phosphoribosyl)-ATP (PR-ATP). Has a crucial role in the pathway because the rate of histidine biosynthesis seems to be controlled primarily by regulation of HisG enzymatic activity. In Staphylococcus carnosus (strain TM300), this protein is ATP phosphoribosyltransferase.